A 274-amino-acid polypeptide reads, in one-letter code: Undecaprenyl-diphosphatase (274 aa).

8 helical membrane-spanning segments follow: residues 1 to 21, 42 to 62, 81 to 101, 107 to 127, 142 to 162, 184 to 204, 213 to 233, and 248 to 268; these read MDWLYSLIYGIVEGITEFLPI, VKDTFEVVIQGGAILAVLVYY, LWLGVVLACIPAVILGVLFGD, LFRPSVVAWALIVGGVLMWLL, ISAGKALAIGAAQCLALLWPG, TKFSFYLGVPTLGGAALLDFI, IGVVNVAIGAVTSFVVAYFAI, and FAVYRVVVGVLILVLIARGVL.

This sequence belongs to the UppP family.

The protein localises to the cell membrane. The catalysed reaction is di-trans,octa-cis-undecaprenyl diphosphate + H2O = di-trans,octa-cis-undecaprenyl phosphate + phosphate + H(+). Functionally, catalyzes the dephosphorylation of undecaprenyl diphosphate (UPP). Confers resistance to bacitracin. This chain is Undecaprenyl-diphosphatase, found in Deinococcus radiodurans (strain ATCC 13939 / DSM 20539 / JCM 16871 / CCUG 27074 / LMG 4051 / NBRC 15346 / NCIMB 9279 / VKM B-1422 / R1).